The sequence spans 380 residues: Alcohol dehydrogenase (380 aa).

Residues Cys48, Thr50, His70, Cys100, Cys103, Cys106, Cys114, and Cys178 each contribute to the Zn(2+) site. The an alcohol site is built by Thr50 and His70. Thr50 is an NAD(+) binding site. NAD(+) is bound by residues 203-208, Asp227, Arg232, Thr273, Val296, 296-298, Phe323, and Arg373; these read GLGAVG and VGV.

This sequence belongs to the zinc-containing alcohol dehydrogenase family. As to quaternary structure, homodimer. Requires Zn(2+) as cofactor.

The protein localises to the cytoplasm. It catalyses the reaction a primary alcohol + NAD(+) = an aldehyde + NADH + H(+). The enzyme catalyses a secondary alcohol + NAD(+) = a ketone + NADH + H(+). This chain is Alcohol dehydrogenase (ADH), found in Malus domestica (Apple).